We begin with the raw amino-acid sequence, 505 residues long: Probable bifunctional methylthioribulose-1-phosphate dehydratase/enolase-phosphatase E1 (505 aa).

The tract at residues 1 to 237 (MGLDKDGISN…ALKLHQLGLD (237 aa)) is methylthioribulose-1-phosphate dehydratase. Cysteine 109 contacts substrate. Residues histidine 127 and histidine 129 each contribute to the Zn(2+) site. Catalysis depends on glutamate 152, which acts as the Proton donor/acceptor; for methylthioribulose-1-phosphate dehydratase activity. Residue histidine 202 participates in Zn(2+) binding. Residues 266 to 505 (FVLDIEGTTT…FRTAKSLLEL (240 aa)) are enolase-phosphatase E1. The Mg(2+) site is built by aspartate 269 and glutamate 271. Substrate is bound by residues 404-405 (SS) and lysine 438. Aspartate 464 contacts Mg(2+).

In the N-terminal section; belongs to the aldolase class II family. MtnB subfamily. It in the C-terminal section; belongs to the HAD-like hydrolase superfamily. MasA/MtnC family. The cofactor is Zn(2+). It depends on Mg(2+) as a cofactor.

It carries out the reaction 5-(methylsulfanyl)-D-ribulose 1-phosphate = 5-methylsulfanyl-2,3-dioxopentyl phosphate + H2O. The enzyme catalyses 5-methylsulfanyl-2,3-dioxopentyl phosphate + H2O = 1,2-dihydroxy-5-(methylsulfanyl)pent-1-en-3-one + phosphate. It participates in amino-acid biosynthesis; L-methionine biosynthesis via salvage pathway; L-methionine from S-methyl-5-thio-alpha-D-ribose 1-phosphate: step 2/6. Its pathway is amino-acid biosynthesis; L-methionine biosynthesis via salvage pathway; L-methionine from S-methyl-5-thio-alpha-D-ribose 1-phosphate: step 3/6. The protein operates within amino-acid biosynthesis; L-methionine biosynthesis via salvage pathway; L-methionine from S-methyl-5-thio-alpha-D-ribose 1-phosphate: step 4/6. The polypeptide is Probable bifunctional methylthioribulose-1-phosphate dehydratase/enolase-phosphatase E1 (Physcomitrium patens (Spreading-leaved earth moss)).